Consider the following 663-residue polypeptide: GPI mannosyltransferase 3 (663 aa).

The span at 1 to 11 shows a compositional bias: basic residues; it reads MPMSARSRRSN. A disordered region spans residues 1-44; it reads MPMSARSRRSNPRLPPSPSSSSSSDAVRASPHSSPPSRLRPPSA. Residues 19–42 are compositionally biased toward low complexity; sequence SSSSSSDAVRASPHSSPPSRLRPP. A run of 8 helical transmembrane segments spans residues 47-67, 110-130, 137-157, 226-246, 269-289, 304-324, 335-355, and 367-387; these read DVSSNILLFLIGFRLVNALTV, PLIFAAVYTVADLVARTLGLT, LLIAGPGITQAVIAAVGDFYT, VLAVSTVVDRFFYGFWTFPPL, YASQGYPLLLTTALPFTLVGL, GSILVQLASISLAMPATLSVI, LLPALHILSASPLVEFFIPAL, and LTLIFLLWANVAIAIYTTLFH. The disordered stretch occupies residues 492–512; sequence HIPRRPSYATPPSSQRQPTQL. The segment covering 501-511 has biased composition (polar residues); it reads TPPSSQRQPTQ.

The protein belongs to the glycosyltransferase 22 family. PIGB subfamily.

Its subcellular location is the endoplasmic reticulum membrane. It participates in glycolipid biosynthesis; glycosylphosphatidylinositol-anchor biosynthesis. In terms of biological role, mannosyltransferase involved in glycosylphosphatidylinositol-anchor biosynthesis. Transfers the third mannose to Man2-GlcN-acyl-PI during GPI precursor assembly. This Emericella nidulans (strain FGSC A4 / ATCC 38163 / CBS 112.46 / NRRL 194 / M139) (Aspergillus nidulans) protein is GPI mannosyltransferase 3 (gpi10).